The sequence spans 480 residues: Glutamyl-tRNA(Gln) amidotransferase subunit A (480 aa).

Catalysis depends on charge relay system residues Lys76 and Ser151. Ser175 acts as the Acyl-ester intermediate in catalysis.

The protein belongs to the amidase family. GatA subfamily. In terms of assembly, heterotrimer of A, B and C subunits.

It carries out the reaction L-glutamyl-tRNA(Gln) + L-glutamine + ATP + H2O = L-glutaminyl-tRNA(Gln) + L-glutamate + ADP + phosphate + H(+). Allows the formation of correctly charged Gln-tRNA(Gln) through the transamidation of misacylated Glu-tRNA(Gln) in organisms which lack glutaminyl-tRNA synthetase. The reaction takes place in the presence of glutamine and ATP through an activated gamma-phospho-Glu-tRNA(Gln). The sequence is that of Glutamyl-tRNA(Gln) amidotransferase subunit A from Exiguobacterium sp. (strain ATCC BAA-1283 / AT1b).